A 77-amino-acid polypeptide reads, in one-letter code: MKLIIFTGLVLFAIVSLIEAQAENERACLPQYQVCTDAPGNCCSNLVCDCYGRYKSGTRIGRNCFCLQKGVIYKREN.

Positions 1–20 (MKLIIFTGLVLFAIVSLIEA) are cleaved as a signal peptide. The propeptide occupies 21-26 (QAENER).

It belongs to the neurotoxin 19 (CSTX) family. 08 (U8-Lctx) subfamily. Post-translationally, contains 4 disulfide bonds. As to expression, expressed by the venom gland.

The protein resides in the secreted. This chain is U8-lycotoxin-Ls1s, found in Lycosa singoriensis (Wolf spider).